The chain runs to 396 residues: Cell division protein FtsZ 1 (396 aa).

The segment at 1–38 is disordered; the sequence is MDSIVQDAIDEAEESEDSASEPADVAGGGGDTVPTGTM. Over residues 8 to 19 the composition is skewed to acidic residues; it reads AIDEAEESEDSA. GTP-binding positions include 61–65, 148–150, Glu179, Arg183, and Asp226; these read GAGSN and GTG. The segment at 358 to 396 is disordered; that stretch reads QIYGRNEAAEGDGPAQESTPEPEPEPQAGSEIEDIDYVE.

Belongs to the FtsZ family. As to quaternary structure, homodimer. Polymerizes to form a dynamic ring structure in a strictly GTP-dependent manner. Interacts directly with several other division proteins.

It is found in the cytoplasm. In terms of biological role, essential cell division protein that forms a contractile ring structure (Z ring) at the future cell division site. The regulation of the ring assembly controls the timing and the location of cell division. One of the functions of the FtsZ ring is to recruit other cell division proteins to the septum to produce a new cell wall between the dividing cells. Binds GTP and shows GTPase activity. This Halobacterium salinarum (strain ATCC 29341 / DSM 671 / R1) protein is Cell division protein FtsZ 1.